The sequence spans 423 residues: Protein disulfide isomerase-like 5-2 (423 aa).

A signal peptide spans 1 to 35 (MAATTTRPLPLLLLLLLPPLLLLLLSFHAAAAAAA). A Thioredoxin domain is found at 36–149 (EEFPRDGRVI…LVRNLNKFVA (114 aa)). Catalysis depends on nucleophile residues Cys-71 and Cys-74. A disulfide bridge links Cys-71 with Cys-74. A glycan (N-linked (GlcNAc...) asparagine) is linked at Asn-181. Residues 386–406 (LVSLNSLYILICVFALLGVMI) traverse the membrane as a helical segment.

It belongs to the protein disulfide isomerase family.

It is found in the membrane. Acts as a protein-folding catalyst that interacts with nascent polypeptides to catalyze the formation, isomerization, and reduction or oxidation of disulfide bonds. May play a role in storage protein biogenesis. The chain is Protein disulfide isomerase-like 5-2 (PDIL5-2) from Oryza sativa subsp. japonica (Rice).